The primary structure comprises 397 residues: Odorant receptor 22b (397 aa).

Over 1–49 the chain is Cytoplasmic; that stretch reads MLSQFFPHIKEKPLSERVKSRDAFVYLDRVMWSFGWTVPENKRWDLHYK. The helical transmembrane segment at 50-70 threads the bilayer; that stretch reads LWSTFVTLLIFILLPISVSVE. The Extracellular portion of the chain corresponds to 71–85; it reads YIQRFKTFSAGEFLS. The helical transmembrane segment at 86–105 threads the bilayer; sequence SIQIGVNMYGSSFKSYLTMM. Residues 106-143 lie on the Cytoplasmic side of the membrane; that stretch reads GYKKRQEAKMSLDELDKRCVCDEERTIVHRHVALGNFC. The helical transmembrane segment at 144-164 threads the bilayer; it reads YIFYHIAYTSFLISNFLSFIM. The Extracellular portion of the chain corresponds to 165–194; the sequence is KRIHAWRMYFPYVDPEKQFYISSIAEVILR. Residues 195-215 traverse the membrane as a helical segment; that stretch reads GWAVFMDLCTDVCPLISMVIA. Residues 216 to 268 lie on the Cytoplasmic side of the membrane; that stretch reads RCHITLLKQRLRNLRSEPGRTEDEYLKELADCVRDHRLILDYVDALRSVFSGT. Residues 269–289 traverse the membrane as a helical segment; sequence IFVQFLLIGIVLGLSMINIMF. Topologically, residues 290-295 are extracellular; it reads FSTLST. Residues 296-316 form a helical membrane-spanning segment; that stretch reads GVAVVLFMSCVSMQTFPFCYL. Over 317 to 347 the chain is Cytoplasmic; sequence CNMIMDDCQEMADSLFQSDWTSADRRYKSTL. Residues 348 to 368 traverse the membrane as a helical segment; the sequence is VYFLHNLQQPIILTAGGVFPI. At 369–397 the chain is on the extracellular side; sequence SMQTNLNMVKLAFTVVTIVKQFNLAEKFQ.

It belongs to the insect chemoreceptor superfamily. Heteromeric odorant receptor channel (TC 1.A.69) family. Or2a subfamily. In terms of assembly, interacts with Orco, via conserved C-terminal cytoplasmic loops. Complexes exist early in the endomembrane system in olfactory sensory neurons (OSNs), coupling these complexes to the conserved ciliary trafficking pathway. As to expression, expressed with Orco in 20-22 sensory neurons on the medial-proximal edge of the antenna. This expression pattern matches the distribution of the large sensilla basiconica. Expression is first seen at 60 hours APF in a subset of cells restricted to a subregion of the developing antenna. Expression continues throughout antennal development. Expressed in the ab3A neuron which responds to ethyl butyrate.

The protein resides in the cell membrane. Its function is as follows. Odorant receptor which mediates acceptance or avoidance behavior, depending on its substrates. The odorant receptor repertoire encodes a large collection of odor stimuli that vary widely in identity, intensity, and duration. Involved in the behavioral responses to esters. Complexes with Orco to form odorant-sensing units, providing sensitive and prolonged odorant signaling and calcium permeability. They are necessary and sufficient to promote functional reconstitution of odor-evoked signaling in sensory neurons that normally respond only to carbon dioxide. The chain is Odorant receptor 22b (Or22b) from Drosophila melanogaster (Fruit fly).